A 100-amino-acid chain; its full sequence is MSPTLSTGNRDQRGSSRSYAFVSLASHHFTPQGKITITSSLTRKIDPGNFQGQDVVDFSPWVVLPDEDKVAFLISCRVTAKIRKSGLPQLFKTNTSRDIG.

The protein localises to the mitochondrion. This is an uncharacterized protein from Arabidopsis thaliana (Mouse-ear cress).